Consider the following 431-residue polypeptide: Serine hydroxymethyltransferase (431 aa).

Residues Leu-127 and 131–133 (GHL) each bind (6S)-5,6,7,8-tetrahydrofolate. Residue Lys-236 is modified to N6-(pyridoxal phosphate)lysine.

It belongs to the SHMT family. As to quaternary structure, homodimer. Requires pyridoxal 5'-phosphate as cofactor.

It localises to the cytoplasm. It carries out the reaction (6R)-5,10-methylene-5,6,7,8-tetrahydrofolate + glycine + H2O = (6S)-5,6,7,8-tetrahydrofolate + L-serine. Its pathway is one-carbon metabolism; tetrahydrofolate interconversion. It participates in amino-acid biosynthesis; glycine biosynthesis; glycine from L-serine: step 1/1. In terms of biological role, catalyzes the reversible interconversion of serine and glycine with tetrahydrofolate (THF) serving as the one-carbon carrier. This reaction serves as the major source of one-carbon groups required for the biosynthesis of purines, thymidylate, methionine, and other important biomolecules. Also exhibits THF-independent aldolase activity toward beta-hydroxyamino acids, producing glycine and aldehydes, via a retro-aldol mechanism. The polypeptide is Serine hydroxymethyltransferase (Granulibacter bethesdensis (strain ATCC BAA-1260 / CGDNIH1)).